Here is a 1709-residue protein sequence, read N- to C-terminus: Intraflagellar transport protein 122 (1709 aa).

WD repeat units lie at residues 51-89 (TQHPLVTCLAISPDGHMVVSMGTDGAVMFNDSTGAALFK) and 132-171 (SFKGTPRAIAWAPGSDWFVISTQDGDLVIMTPEGMELNSC). A disordered region spans residues 209–229 (TIPQTVTPSASASGRSGSGKR). One copy of the WD 3 repeat lies at 634 to 673 (LHRSPIVSLDISPDRKYISVVDRSDVVSVYKFLDDSEIVL). The stretch at 1231-1256 (IEALERLRLSGNTSKEAIIIKQLIDA) is one LRR 1 repeat. A disordered region spans residues 1378–1404 (LSGEDTVKASSQRSKKDNPPSLRSTIG). The stretch at 1414 to 1436 (LGSLAHIDLGINNMNIPPGISEL) is one LRR 2 repeat.

The protein localises to the cell projection. Its subcellular location is the cilium. It is found in the flagellum. The protein resides in the cytoplasm. It localises to the cytoskeleton. The protein localises to the flagellum axoneme. Its subcellular location is the flagellum basal body. Its function is as follows. Component of the intraflagellar transport complex A (IFT-A) involved in flagellar assembly. The polypeptide is Intraflagellar transport protein 122 (Giardia intestinalis (strain ATCC 50803 / WB clone C6) (Giardia lamblia)).